Consider the following 159-residue polypeptide: Betainyl-CoA thioesterase (159 aa).

It belongs to the betainyl-CoA thioesterase family.

The enzyme catalyses N,N,N-trimethylglycyl-CoA + H2O = glycine betaine + CoA + H(+). The protein operates within amine and polyamine metabolism; carnitine metabolism. Functionally, catalyzes the cleavage of betainyl-CoA (N,N,N-trimethylglycyl-CoA) into glycine betaine and coenzyme A. Is involved in a L-carnitine degradation pathway that allows P.aeruginosa to grow on L-carnitine as the sole source of carbon and nitrogen. This Pseudomonas aeruginosa (strain ATCC 15692 / DSM 22644 / CIP 104116 / JCM 14847 / LMG 12228 / 1C / PRS 101 / PAO1) protein is Betainyl-CoA thioesterase.